The chain runs to 157 residues: S-ribosylhomocysteine lyase (157 aa).

Fe cation-binding residues include H53, H57, and C124.

It belongs to the LuxS family. In terms of assembly, homodimer. Fe cation is required as a cofactor.

The catalysed reaction is S-(5-deoxy-D-ribos-5-yl)-L-homocysteine = (S)-4,5-dihydroxypentane-2,3-dione + L-homocysteine. Its function is as follows. Involved in the synthesis of autoinducer 2 (AI-2) which is secreted by bacteria and is used to communicate both the cell density and the metabolic potential of the environment. The regulation of gene expression in response to changes in cell density is called quorum sensing. Catalyzes the transformation of S-ribosylhomocysteine (RHC) to homocysteine (HC) and 4,5-dihydroxy-2,3-pentadione (DPD). This chain is S-ribosylhomocysteine lyase, found in Borrelia garinii subsp. bavariensis (strain ATCC BAA-2496 / DSM 23469 / PBi) (Borreliella bavariensis).